The sequence spans 534 residues: MVLQDLGRRINAAVNDLTRSNNLDEKQAFDDMIKEICAALLSADVNVRLVQSLRKSIKSSVNFASLPPAVNKKRLIQKAVFDELVSLVDPHAEPFRPKKGRSNVIMFVGLQGAGKTTTCTKLARHYQMRGFKTALVCADTFRAGAFDQLKQNATKAKIPYYGSLTQTDPAIVAAEGVAKFKKERFEIIIVDTSGRHKQEEELFTEMTQIQTAVTPDQTILVLDSTIGQAAEAQSSAFKATADFGAIIITKTDGHAAGGGAISAVAATHTPIIYLGTGEHLMDLERFEPKAFIQKLLGMGDMAGLVEHVQAVTKDSASAKETYKHISEGIYTLRDFRENITSIMKMGPLSKLSGMIPGLSNLTAGLDDEDGSMKLRRMIYIFDSMTAAELDGDGKMFVEQPSRMVRIACGSGTTVREVEDLLSQHRMMAGMAKRVGGQKKQMQRAQNMLKGGNKEQQLAAMQKRMAAMGGAGGGGFPGMPGMGDMAKMMQMLQGQGGGGGGGLPGLGGMDLQSMMSQMSGLMGGGGGGGGRGRGR.

The G-domain stretch occupies residues 1–296 (MVLQDLGRRI…EPKAFIQKLL (296 aa)). GTP contacts are provided by residues 109-116 (GLQGAGKT), 191-195 (DTSGR), and 249-252 (TKTD). Positions 297 to 534 (GMGDMAGLVE…GGGGGRGRGR (238 aa)) are M-domain.

The protein belongs to the GTP-binding SRP family. SRP54 subfamily. As to quaternary structure, fungal signal recognition particle consists of a 7S RNA molecule (scR1) and at least six protein subunits: srp72, srp68, srpA/srp54, sec65, srp21 and srp14.

It is found in the cytoplasm. Its subcellular location is the endoplasmic reticulum. It catalyses the reaction GTP + H2O = GDP + phosphate + H(+). In terms of biological role, signal-recognition-particle (SRP) assembly has a crucial role in targeting secretory proteins to the rough endoplasmic reticulum (ER) membrane. SRP is required for the cotranslational protein translocation for ER import and preferentially recognizes strongly hydrophobic signal sequences. It is involved in targeting the nascent chain-ribosome (RNC) complex to the ER and is proposed to participate in the arrest of nascent chain elongation during membrane targeting. srpA/srp54 binds to the signal sequence of presecretory protein when they emerge from the ribosomes. srpA/srp54 interacts with the scR1 RNA and mediates the association of the resulting SRP-RNC complex with the signal recognition particle receptor (SR) via its alpha subunit srp101. Both, srpA/srp54 and srp101, are locked in their GTP bound forms in the SRP-RNC-SR complex, which dissociates upon transferring the signal sequence to the protein-conducting channel (translocon). After signal sequence transfer, srpA/srp54 and srp101 act as reciprocal GTPase-activating proteins (GAPs), thereby resolving their association. The sequence is that of Signal recognition particle subunit SRP54 (srpA) from Aspergillus niger.